The primary structure comprises 213 residues: UPF0502 protein Daro_2469 (213 aa).

It belongs to the UPF0502 family.

This is UPF0502 protein Daro_2469 from Dechloromonas aromatica (strain RCB).